The primary structure comprises 141 residues: Putative RING-H2 finger protein ATL62 (141 aa).

A helical membrane pass occupies residues 14-32 (FFAILTVFYSIFRCCLAYC). Residues 79–121 (CVVCLSKFIDEDKARVLPSCNHCFHFDFTDTWLHSDYTCPNCR) form an RING-type; degenerate zinc finger.

It belongs to the RING-type zinc finger family. ATL subfamily.

It is found in the membrane. It carries out the reaction S-ubiquitinyl-[E2 ubiquitin-conjugating enzyme]-L-cysteine + [acceptor protein]-L-lysine = [E2 ubiquitin-conjugating enzyme]-L-cysteine + N(6)-ubiquitinyl-[acceptor protein]-L-lysine.. It participates in protein modification; protein ubiquitination. The polypeptide is Putative RING-H2 finger protein ATL62 (ATL62) (Arabidopsis thaliana (Mouse-ear cress)).